The primary structure comprises 491 residues: Glutamyl-tRNA(Gln) amidotransferase subunit A (491 aa).

Residues Lys-79 and Ser-154 each act as charge relay system in the active site. Ser-178 acts as the Acyl-ester intermediate in catalysis.

This sequence belongs to the amidase family. GatA subfamily. In terms of assembly, heterotrimer of A, B and C subunits.

It carries out the reaction L-glutamyl-tRNA(Gln) + L-glutamine + ATP + H2O = L-glutaminyl-tRNA(Gln) + L-glutamate + ADP + phosphate + H(+). Its function is as follows. Allows the formation of correctly charged Gln-tRNA(Gln) through the transamidation of misacylated Glu-tRNA(Gln) in organisms which lack glutaminyl-tRNA synthetase. The reaction takes place in the presence of glutamine and ATP through an activated gamma-phospho-Glu-tRNA(Gln). The polypeptide is Glutamyl-tRNA(Gln) amidotransferase subunit A (Natranaerobius thermophilus (strain ATCC BAA-1301 / DSM 18059 / JW/NM-WN-LF)).